Reading from the N-terminus, the 394-residue chain is Elongation factor Tu (394 aa).

One can recognise a tr-type G domain in the interval Lys-10–Val-204. Residues Gly-19–Thr-26 are G1. A GTP-binding site is contributed by Gly-19 to Thr-26. Residue Thr-26 coordinates Mg(2+). A G2 region spans residues Gly-60 to Ser-64. Residues Asp-81 to Gly-84 form a G3 region. Residues Asp-81–His-85 and Asn-136–Asp-139 contribute to the GTP site. Residues Asn-136 to Asp-139 form a G4 region. A G5 region spans residues Ser-174–Leu-176.

It belongs to the TRAFAC class translation factor GTPase superfamily. Classic translation factor GTPase family. EF-Tu/EF-1A subfamily. As to quaternary structure, monomer.

Its subcellular location is the cytoplasm. The catalysed reaction is GTP + H2O = GDP + phosphate + H(+). In terms of biological role, GTP hydrolase that promotes the GTP-dependent binding of aminoacyl-tRNA to the A-site of ribosomes during protein biosynthesis. This is Elongation factor Tu from Rickettsia peacockii (strain Rustic).